We begin with the raw amino-acid sequence, 457 residues long: RuvB-like helicase 1 (457 aa).

An ATP-binding site is contributed by 73–80 (GGPSTGKT).

It belongs to the RuvB family. As to quaternary structure, may form heterododecamers with RVB2. Component of the SWR1 chromatin remodeling complex, the INO80 chromatin remodeling complex, and of the R2TP complex.

It localises to the nucleus. The enzyme catalyses ATP + H2O = ADP + phosphate + H(+). Its function is as follows. DNA helicase which participates in several chromatin remodeling complexes, including the SWR1 and the INO80 complexes. The SWR1 complex mediates the ATP-dependent exchange of histone H2A for the H2A variant HZT1 leading to transcriptional regulation of selected genes by chromatin remodeling. The INO80 complex remodels chromatin by shifting nucleosomes and is involved in DNA repair. Also involved in pre-rRNA processing. The protein is RuvB-like helicase 1 (RVB1) of Candida glabrata (strain ATCC 2001 / BCRC 20586 / JCM 3761 / NBRC 0622 / NRRL Y-65 / CBS 138) (Yeast).